The following is a 512-amino-acid chain: ATP synthase subunit alpha (512 aa).

169 to 176 (GDRQTGKT) lines the ATP pocket.

Belongs to the ATPase alpha/beta chains family. In terms of assembly, F-type ATPases have 2 components, CF(1) - the catalytic core - and CF(0) - the membrane proton channel. CF(1) has five subunits: alpha(3), beta(3), gamma(1), delta(1), epsilon(1). CF(0) has three main subunits: a(1), b(2) and c(9-12). The alpha and beta chains form an alternating ring which encloses part of the gamma chain. CF(1) is attached to CF(0) by a central stalk formed by the gamma and epsilon chains, while a peripheral stalk is formed by the delta and b chains.

It localises to the cell membrane. The catalysed reaction is ATP + H2O + 4 H(+)(in) = ADP + phosphate + 5 H(+)(out). Produces ATP from ADP in the presence of a proton gradient across the membrane. The alpha chain is a regulatory subunit. This chain is ATP synthase subunit alpha, found in Elusimicrobium minutum (strain Pei191).